The sequence spans 2005 residues: MSALDEVAKLSQLTNITPDTIFSVLRDRFYAGLPYTALSDSILVSVNPYASSGNRNSDDTLREYTSDYRQTNKQLRAATLPPHIFAHACNAYFYMRRTGQDQSLLMAGDTSSGKSEVRRLALRALIDLSVAPPGKKGSKLGVQIPSAEYILEALGNSRTLENSNASRFGKYTELQFSDSGKLVGAKTLDYYLEKNRVVSAASSERNFHIFHYMVAGASDEEKQYLGIHDAASFRYLGQASRNMDTQDAAKFDRLKLAFKNVGFSKRNVASICQVLAAILHLGNIEFHYDRQRTQDSATIRNPEVLDKVAEYLGISSKSLEEALTYKTKMIRNEVCTILLDADGASDHRDDLAKSLYSLLFAWVNESLNEKLCRDDFDTFIGLLDLPGFQNLSKGNSLDQFCVNFACENLHRFMLRSVFEKRRDEFADEGISHLSPEVPYFDNAETLRLMTNQPGGLIHIMDDQARRMPKKTDQTMIEAFGKRWGNHPSFKVGPADRSGFSSFTISHYNSAVTYTSENLLEKNSEVVSTDFVSLLRGNPQESGKLRNDSSQSSGSTIPFIRGIFNTKVLKTQSHPKNDQTIVAAQQSVKPMRAPSTRRPNRGNTIKRTNTIKKADDDDSDEDAADAADASTSKKNAVRCVAGDFRGALDLLLETLEDTKTWFTLCLRPNDNQLPNQFEARVVKQQITTLGLSEMSRKLLNEYSVSMTYEEFCQRYADVPSLQAVQMRDAVSGEAKQKFSAARQVMSWSDQEAVSGRVKVFLSHTAFRELEDELRAADAEEVKNNEKRAQLDADAAARGESDPFSPVAVLADDYTRSRSNDFVGAYGDPFKERSSVALPLVGRGAAGNEDDLEEVKSQYSGMSGTLARHSFVGGLSGAPSFVASEAYAPSRNMFADMGKNGLNEKAGTAAFTEEPLGEVAEEVGVSSTRRKWVALTWAITFWIPSFILSRFRSLKRPDIRMAWREKLAINLIIWFICACAVFVIVVLGNLICPKQHVYSPTEFASHKGDSSFTAIRGEVFDLSNLVASHKTIVPVVPANSILAYAGEDATPIFPVQVNALCNGVDGNVSPWVQLSNENSTDKHAQYHDFRSYHIDDARPDWYYESMWLLRSNYRVGFMGYTTDGIRDILSEGRAVAIYRGDIYDVSDYIKQGNQGVLRAPDGFQAPANTNRKFMSDAIISLIAQNPGKDITKQLDNLPLDPVVLDRQRVCLRNLYFIGKVDHRNSPQCRFAQYILLALSLFMVAILGFKFLAALQFGRARKPEDHDKFVICQVPCYTEGEESMRKTINSLAALKYDDKRKLLFIICDGMIVGSGNDRPTPRIVLDILGADPNLEPEALSFLSLGEGSKQHNMAKIYSGLYEHHGHVVPYIVVVKCGKPSERSRPGNRGKRDSQLVLMRFLNKVHFGLPMNPMELEIYHQIKNVIGVNPSFYEYILQVDADTEVEAMSLNRFISAFIRDKKVIGLCGETALSNAKASIITMLQVYEYYISHYLAKAFESLFGSVTCLPGCFSMFRIRTPDTHRPLFIASQIVEDYAENRVDTLHTKNLLHLGEDRYLTTLVLKHFGKYKTIFVRDCKAWTVAPDDWKVLLSQRRRWINSTVHNLVELIFTPGLCGFCLFSMRFIVFIDLLSTIIAPVTVCYIVYLIVLVATANGTVPLTAIIMLAAIYGCQAVIFLLNRKFEMIGWMIVYIIGIPIWSLFLPLYSFWHMDDFSWGNTRVVMGEKGQKVVLHEEGTFDPSEIPLQTWTDYENELWERNSARSIGSIIEAARAENKSLGSRAGSQYAPSLYGQPMLPHNASFGHSPSPSYGGTPSQFGAFAPGPGSQIGGSQIGAGAGYFPQDAARQSTYSIGGGYGGQAMSMYGLPPSSSFGVPTGGSGFMPQPFNTTASMYGYPQQVAATQSIYGGSQLGFGGGFATAEQQQQQQQQQQAAGLSGSGGSKSPPREAVAGGLPSDSQIKLDIRSLIAESDLTTITKKQLRAKLEQKYATSIESKKAFINSEIENVLSES.

One can recognise a Myosin motor domain in the interval 5–773 (DEVAKLSQLT…AFRELEDELR (769 aa)). 108–115 (GDTSSGKS) is an ATP binding site. N-linked (GlcNAc...) asparagine glycosylation is found at Asn164, Asn364, Asn390, and Asn546. The disordered stretch occupies residues 585-631 (QSVKPMRAPSTRRPNRGNTIKRTNTIKKADDDDSDEDAADAADASTS). Positions 615–624 (DDDSDEDAAD) are enriched in acidic residues. Residues 647 to 669 (LDLLLETLEDTKTWFTLCLRPND) are actin-binding. The next 2 membrane-spanning stretches (helical) occupy residues 929–949 (KWVA…LSRF) and 965–985 (LAIN…IVVL). Asn1076 is a glycosylation site (N-linked (GlcNAc...) asparagine). 3 helical membrane passes run 1232-1252 (ILLA…LAAL), 1604-1624 (LIFT…IVFI), and 1626-1646 (LLST…IVLV). N-linked (GlcNAc...) asparagine glycosylation occurs at Asn1650. 2 consecutive transmembrane segments (helical) span residues 1653 to 1673 (VPLT…VIFL) and 1680 to 1700 (MIGW…FLPL). N-linked (GlcNAc...) asparagine glycans are attached at residues Asn1770 and Asn1794. The interval 1796–1821 (SFGHSPSPSYGGTPSQFGAFAPGPGS) is disordered. The segment covering 1797 to 1811 (FGHSPSPSYGGTPSQ) has biased composition (polar residues). N-linked (GlcNAc...) asparagine glycosylation is present at Asn1882. The interval 1912–1950 (FATAEQQQQQQQQQQAAGLSGSGGSKSPPREAVAGGLPS) is disordered. The segment covering 1917–1930 (QQQQQQQQQQAAGL) has biased composition (low complexity). One can recognise a DEK-C domain in the interval 1948 to 2003 (LPSDSQIKLDIRSLIAESDLTTITKKQLRAKLEQKYATSIESKKAFINSEIENVLS).

This sequence in the N-terminal section; belongs to the TRAFAC class myosin-kinesin ATPase superfamily. Myosin family. In the C-terminal section; belongs to the chitin synthase family. Class V subfamily.

The protein resides in the cell membrane. Its subcellular location is the cytoplasmic vesicle membrane. It is found in the cell tip. The enzyme catalyses [(1-&gt;4)-N-acetyl-beta-D-glucosaminyl](n) + UDP-N-acetyl-alpha-D-glucosamine = [(1-&gt;4)-N-acetyl-beta-D-glucosaminyl](n+1) + UDP + H(+). In terms of biological role, polymerizes chitin, a structural polymer of the cell wall and septum, by transferring the sugar moiety of UDP-GlcNAc to the non-reducing end of the growing chitin polymer. Involved in mating tube and dikaryotic hyphae formation and required for the formation of invading hyphae during plant infection. This is Chitin synthase 8 from Mycosarcoma maydis (Corn smut fungus).